A 464-amino-acid chain; its full sequence is Maturase K (464 aa).

This sequence belongs to the intron maturase 2 family. MatK subfamily.

The protein resides in the plastid. The protein localises to the chloroplast. Usually encoded in the trnK tRNA gene intron. Probably assists in splicing its own and other chloroplast group II introns. The chain is Maturase K from Castanea crenata (Japanese chestnut).